Here is a 278-residue protein sequence, read N- to C-terminus: Proline-rich 28 kDa antigen homolog (278 aa).

The signal sequence occupies residues 1–28 (MIQSTQTWRVLAGGLAATAMGVTVFAGG).

It to M.tuberculosis Rv0040c.

The protein is Proline-rich 28 kDa antigen homolog of Mycobacterium leprae (strain TN).